Reading from the N-terminus, the 194-residue chain is Outer surface 22 kDa lipoprotein (194 aa).

The signal sequence occupies residues 1 to 21; sequence MYKNGFFKNYLSLLLIFLVIA. Cys22 is lipidated: N-palmitoyl cysteine. Residue Cys22 is the site of S-diacylglycerol cysteine attachment.

It localises to the cell outer membrane. In Borreliella burgdorferi (strain N40) (Borrelia burgdorferi), this protein is Outer surface 22 kDa lipoprotein (p22).